A 430-amino-acid chain; its full sequence is Divergent protein kinase domain 2A (430 aa).

The signal sequence occupies residues 1 to 35; the sequence is MWRLVPLKLGRLSRALKLAALGSLLVLMLLHSPSL.

It belongs to the DIPK family. In terms of tissue distribution, expressed in heart, brain, liver, spleen, kidney, lung, thymus, testis, ovary and muscle.

It localises to the golgi apparatus. Its subcellular location is the cytoplasmic vesicle. The protein localises to the COPI-coated vesicle. The protein resides in the secreted. Functionally, may play a role in cardiomyocyte proliferation through paracrine signaling and activation of the PI3-kinase signaling cascade. This chain is Divergent protein kinase domain 2A (Dipk2a), found in Mus musculus (Mouse).